Reading from the N-terminus, the 411-residue chain is 2-oxoglutarate-dependent dioxygenase AOP3 (411 aa).

A Fe2OG dioxygenase domain is found at 259–356; the sequence is GNASVGAKEA…RYAAALFSNP (98 aa). Residues His279, Asp281, and His336 each contribute to the Fe cation site. 2-oxoglutarate is bound at residue Arg347.

This sequence belongs to the iron/ascorbate-dependent oxidoreductase family. Requires Fe(2+) as cofactor. Not expressed.

Its function is as follows. 2-oxoglutarate-dependent dioxygenase involved in glucosinolates biosynthesis. Catalyzes the conversion of methylsulfinylalkyl glucosinolates to hydroxyalkyl glucosinolates. This chain is 2-oxoglutarate-dependent dioxygenase AOP3 (AOP3), found in Arabidopsis thaliana (Mouse-ear cress).